A 255-amino-acid polypeptide reads, in one-letter code: Adenosylcobinamide-GDP ribazoletransferase (255 aa).

Transmembrane regions (helical) follow at residues 24 to 44 (LIAY…SLYV), 45 to 65 (AIYG…IYIV), 98 to 118 (VGAG…ISLS), 122 to 142 (LYIG…MMMI), 164 to 184 (KHDS…ALLS), and 187 to 207 (SIMI…MAVI).

It belongs to the CobS family. Mg(2+) is required as a cofactor.

The protein localises to the cell membrane. It catalyses the reaction alpha-ribazole + adenosylcob(III)inamide-GDP = adenosylcob(III)alamin + GMP + H(+). The enzyme catalyses alpha-ribazole 5'-phosphate + adenosylcob(III)inamide-GDP = adenosylcob(III)alamin 5'-phosphate + GMP + H(+). The protein operates within cofactor biosynthesis; adenosylcobalamin biosynthesis; adenosylcobalamin from cob(II)yrinate a,c-diamide: step 7/7. Joins adenosylcobinamide-GDP and alpha-ribazole to generate adenosylcobalamin (Ado-cobalamin). Also synthesizes adenosylcobalamin 5'-phosphate from adenosylcobinamide-GDP and alpha-ribazole 5'-phosphate. This Thermoplasma acidophilum (strain ATCC 25905 / DSM 1728 / JCM 9062 / NBRC 15155 / AMRC-C165) protein is Adenosylcobinamide-GDP ribazoletransferase.